A 1133-amino-acid polypeptide reads, in one-letter code: Sterol regulatory element-binding protein 1 (1133 aa).

The transcriptional activation (acidic) stretch occupies residues 1–60; it reads MDELPFGEAAVEQALDELGELDAALLTDIQDMLQLINNQDSDFPGLFDSPYAGGGAGDTE. The Cytoplasmic segment spans residues 1 to 476; the sequence is MDELPFGEAA…HSHGMLDRSR (476 aa). The 9aaTAD signature appears at 27–35; that stretch reads TDIQDMLQL. Residues 46–78 are disordered; that stretch reads LFDSPYAGGGAGDTEPTSPGANSPESLSSPASL. Residues 68 to 78 are compositionally biased toward low complexity; that stretch reads SPESLSSPASL. Phosphoserine is present on residues S97 and S116. The disordered stretch occupies residues 131–219; it reads LQPPAAQPSP…PLPASTAPRT (89 aa). Over residues 165–180 the composition is skewed to polar residues; it reads SLPSGFSGTLPGNTQQ. Composition is skewed to low complexity over residues 181–191 and 203–217; these read PPSSLSLASAP and QSSASQQPLPASTAP. The segment at 227–486 is interaction with LMNA; sequence QRVPVVLQPH…LALCALVFLC (260 aa). Residues 317–367 enclose the bHLH domain; sequence EKRTAHNAIEKRYRSSINDKIVELKDLVVGTEAKLNKSAVLRKAIDYIRFL. Phosphoserine; by SIK1 occurs at positions 331 and 332. The segment at 367–388 is leucine-zipper; sequence LQHSNQKLKQENLALRNAAHKS. A Phosphoserine; by AMPK modification is found at S390. The residue at position 396 (S396) is a Phosphoserine; by SIK1. The segment at 415 to 456 is disordered; it reads VVDTLTPPPSDAGSPSQSSPLSLGSRGSSSGGSDSEPDSPVF. Residues 425–454 are compositionally biased toward low complexity; sequence DAGSPSQSSPLSLGSRGSSSGGSDSEPDSP. The residue at position 449 (S449) is a Phosphoserine. A helical membrane pass occupies residues 477-497; the sequence is LALCALVFLCLTCNPLASLFG. Over 498 to 535 the chain is Lumenal; sequence WGIPGPSSASGAHHSSGRSMLEAESRDGSNWTQWLLPP. A helical transmembrane segment spans residues 536 to 556; sequence LVWLANGLLVLACLALLFVYG. Over 557–1133 the chain is Cytoplasmic; it reads EPVTRPHTSP…LGGGTTVTSS (577 aa). S1046 is subject to Phosphoserine.

Belongs to the SREBP family. As to quaternary structure, efficient DNA binding of the soluble transcription factor fragment requires dimerization with another bHLH protein. Interacts with CEBPA, the interaction produces a transcriptional synergy. Interacts with LMNA. In terms of assembly, forms a tight complex with SCAP, the SCAP-SREBP complex, in the endoplasmic reticulum membrane and the Golgi apparatus. Interacts with PAQR3; the interaction anchors the SCAP-SREBP complex to the Golgi apparatus in low cholesterol conditions. Post-translationally, processed in the Golgi apparatus, releasing the protein from the membrane. At low cholesterol the SCAP-SREBP complex is recruited into COPII vesicles for export from the endoplasmic reticulum. In the Golgi, complex SREBPs are cleaved sequentially by site-1 (MBTPS1, S1P) and site-2 (MBTPS2, S2P) proteases. The first cleavage by site-1 protease occurs within the luminal loop, the second cleavage by site-2 protease occurs within the first transmembrane domain, releasing the transcription factor from the Golgi membrane. Phosphorylated by AMPK, leading to suppress protein processing and nuclear translocation, and repress target gene expression. Phosphorylation at Ser-396 by SIK1 represses activity possibly by inhibiting DNA-binding. In terms of processing, SCAP-free SREBF1 is ubiquitinated by the BCR(ARMC5) complex, leading to its degradation. Post-translationally, ubiquitinated; the nuclear form has a rapid turnover and is rapidly ubiquitinated and degraded by the proteasome in the nucleus.

Its subcellular location is the endoplasmic reticulum membrane. It is found in the golgi apparatus membrane. The protein localises to the cytoplasmic vesicle. It localises to the COPII-coated vesicle membrane. The protein resides in the nucleus. Activation by cleavage is down-regulated upon activation of SIRT3-dependent PRKAA1/AMPK-alpha signaling cascade which leads to inhibition of ATP-consuming lipogenesis to restore cellular energy balance. Precursor of the transcription factor form (Processed sterol regulatory element-binding protein 1), which is embedded in the endoplasmic reticulum membrane. Low sterol concentrations promote processing of this form, releasing the transcription factor form that translocates into the nucleus and activates transcription of genes involved in cholesterol biosynthesis and lipid homeostasis. In terms of biological role, key transcription factor that regulates expression of genes involved in cholesterol biosynthesis and lipid homeostasis. Binds to the sterol regulatory element 1 (SRE-1) (5'-ATCACCCCAC-3'). Has dual sequence specificity binding to both an E-box motif (5'-ATCACGTGA-3') and to SRE-1 (5'-ATCACCCCAC-3'). Regulates the promoters of genes involved in cholesterol biosynthesis and the LDL receptor (LDLR) pathway of sterol regulation. This is Sterol regulatory element-binding protein 1 from Cricetulus griseus (Chinese hamster).